Here is a 142-residue protein sequence, read N- to C-terminus: Neurofilament heavy polypeptide (142 aa).

An IF rod domain is found at 1-142; that stretch reads MRGAVLRLGA…EAAKVNTDAM (142 aa). Residues 26 to 74 adopt a coiled-coil conformation; the sequence is IAHVRQRLDDEARQRQEAEAAARALARFAQEAEAARVELQKKAQALQEE.

It belongs to the intermediate filament family. Forms heterodimers with NEFL; which can further hetero-oligomerize (in vitro). Forms heterodimers with INA (in vitro). Post-translationally, there are a number of repeats of the tripeptide K-S-P, NFH is phosphorylated on a number of the serines in this motif. It is thought that phosphorylation of NFH results in the formation of interfilament cross bridges that are important in the maintenance of axonal caliber. Phosphorylation seems to play a major role in the functioning of the larger neurofilament polypeptides (NF-M and NF-H), the levels of phosphorylation being altered developmentally and coincidentally with a change in the neurofilament function. In terms of processing, phosphorylated in the head and rod regions by the PKC kinase PKN1, leading to the inhibition of polymerization.

It is found in the cytoplasm. It localises to the cytoskeleton. Its subcellular location is the cell projection. The protein resides in the axon. Functionally, neurofilaments usually contain three intermediate filament proteins: NEFL, NEFM, and NEFH which are involved in the maintenance of neuronal caliber. NEFH has an important function in mature axons that is not subserved by the two smaller NF proteins. May additionally cooperate with the neuronal intermediate filament proteins PRPH and INA to form neuronal filamentous networks. This chain is Neurofilament heavy polypeptide (NEFH), found in Sus scrofa (Pig).